The sequence spans 207 residues: 8-oxoguanine DNA glycosylase/AP lyase (207 aa).

Active-site residues include Lys-128 and Asp-146.

It belongs to the type-2 OGG1 family.

It catalyses the reaction 2'-deoxyribonucleotide-(2'-deoxyribose 5'-phosphate)-2'-deoxyribonucleotide-DNA = a 3'-end 2'-deoxyribonucleotide-(2,3-dehydro-2,3-deoxyribose 5'-phosphate)-DNA + a 5'-end 5'-phospho-2'-deoxyribonucleoside-DNA + H(+). Catalyzes the excision of an oxidatively damaged form of guanine (7,8-dihydro-8-oxoguanine = 8-oxoG) from DNA. Also cleaves the DNA backbone at apurinic/apyrimidinic sites (AP sites). This is 8-oxoguanine DNA glycosylase/AP lyase from Saccharolobus solfataricus (strain ATCC 35092 / DSM 1617 / JCM 11322 / P2) (Sulfolobus solfataricus).